The following is a 482-amino-acid chain: Sensor histidine kinase CusS (482 aa).

The Cytoplasmic segment spans residues 1-15; that stretch reads MVSKPFQRPFSLATR. A helical transmembrane segment spans residues 16–36; the sequence is LTFFISLATIAAFFAFAWIMI. At 37–186 the chain is on the periplasmic side; it reads HSVKVHFAEQ…LHYINDLMNK (150 aa). A helical membrane pass occupies residues 187-207; it reads LIMTASVISILIVFIVLLAVH. Residues 207 to 260 form the HAMP domain; that stretch reads HKGHAPIRSVSRQIQNITSKDLDVRLDPQTVPIELEQLVLSFNHMIERIEDVFT. At 208-482 the chain is on the cytoplasmic side; it reads KGHAPIRSVS…RFVIVLPERG (275 aa). The region spanning 268–482 is the Histidine kinase domain; that stretch reads DIAHEIRTPI…RFVIVLPERG (215 aa). His271 carries the post-translational modification Phosphohistidine; by autocatalysis.

In terms of processing, autophosphorylated.

It is found in the cell inner membrane. It catalyses the reaction ATP + protein L-histidine = ADP + protein N-phospho-L-histidine.. Its function is as follows. Member of the two-component regulatory system CusS/CusR involved in response to copper and silver. Acts as a copper/silver ion sensor. Activates CusR by phosphorylation. The sequence is that of Sensor histidine kinase CusS (cusS) from Escherichia coli O157:H7.